The following is a 524-amino-acid chain: Bifunctional purine biosynthesis protein PurH (524 aa).

Residues 1–145 (MIQQALLSVS…KNHRDVTVIV (145 aa)) enclose the MGS-like domain.

The protein belongs to the PurH family.

The catalysed reaction is (6R)-10-formyltetrahydrofolate + 5-amino-1-(5-phospho-beta-D-ribosyl)imidazole-4-carboxamide = 5-formamido-1-(5-phospho-D-ribosyl)imidazole-4-carboxamide + (6S)-5,6,7,8-tetrahydrofolate. It carries out the reaction IMP + H2O = 5-formamido-1-(5-phospho-D-ribosyl)imidazole-4-carboxamide. It functions in the pathway purine metabolism; IMP biosynthesis via de novo pathway; 5-formamido-1-(5-phospho-D-ribosyl)imidazole-4-carboxamide from 5-amino-1-(5-phospho-D-ribosyl)imidazole-4-carboxamide (10-formyl THF route): step 1/1. It participates in purine metabolism; IMP biosynthesis via de novo pathway; IMP from 5-formamido-1-(5-phospho-D-ribosyl)imidazole-4-carboxamide: step 1/1. The chain is Bifunctional purine biosynthesis protein PurH from Ralstonia nicotianae (strain ATCC BAA-1114 / GMI1000) (Ralstonia solanacearum).